The sequence spans 500 residues: Glutamate--tRNA ligase (500 aa).

Residues 12–22 (PSPTGHLHIGN) carry the 'HIGH' region motif. A 'KMSKS' region motif is present at residues 259 to 263 (KLSKR). Residue Lys262 participates in ATP binding.

This sequence belongs to the class-I aminoacyl-tRNA synthetase family. Glutamate--tRNA ligase type 1 subfamily. In terms of assembly, monomer.

It localises to the cytoplasm. The enzyme catalyses tRNA(Glu) + L-glutamate + ATP = L-glutamyl-tRNA(Glu) + AMP + diphosphate. Functionally, catalyzes the attachment of glutamate to tRNA(Glu) in a two-step reaction: glutamate is first activated by ATP to form Glu-AMP and then transferred to the acceptor end of tRNA(Glu). The protein is Glutamate--tRNA ligase of Lactobacillus delbrueckii subsp. bulgaricus.